The primary structure comprises 437 residues: Glycogen synthase (437 aa).

Lys-15 provides a ligand contact to ADP-alpha-D-glucose.

Belongs to the glycosyltransferase 1 family. Bacterial/plant glycogen synthase subfamily.

It catalyses the reaction [(1-&gt;4)-alpha-D-glucosyl](n) + ADP-alpha-D-glucose = [(1-&gt;4)-alpha-D-glucosyl](n+1) + ADP + H(+). It functions in the pathway glycan biosynthesis; glycogen biosynthesis. Synthesizes alpha-1,4-glucan chains using ADP-glucose. This is Glycogen synthase from Thermus thermophilus (strain ATCC 27634 / DSM 579 / HB8).